A 369-amino-acid chain; its full sequence is Extracellular signal-regulated kinase 2 (369 aa).

The Protein kinase domain occupies 14-304 (YEVLQKIGKG…AEEALAHPFV (291 aa)). Residues 20 to 28 (IGKGAYGIV) and lysine 43 each bind ATP. Aspartate 137 serves as the catalytic Proton acceptor. Threonine 176 is subject to Phosphothreonine. The short motif at 176-178 (TEY) is the TXY element. Tyrosine 178 is subject to Phosphotyrosine. The disordered stretch occupies residues 346-369 (KKKEERKKQTNPTKPDTTAPTLST). Polar residues predominate over residues 355 to 369 (TNPTKPDTTAPTLST).

This sequence belongs to the protein kinase superfamily. CMGC Ser/Thr protein kinase family. MAP kinase subfamily. Mg(2+) serves as cofactor. Dually phosphorylated on Thr-176 and Tyr-178, which activates the enzyme.

It catalyses the reaction L-seryl-[protein] + ATP = O-phospho-L-seryl-[protein] + ADP + H(+). It carries out the reaction L-threonyl-[protein] + ATP = O-phospho-L-threonyl-[protein] + ADP + H(+). Activated by tyrosine and threonine phosphorylation. In terms of biological role, implicated in the relay of the cAMP chemotactic signal and cell differentiation. Important for receptor-mediated activation of adenylyl cyclase. This is Extracellular signal-regulated kinase 2 (erkB) from Dictyostelium discoideum (Social amoeba).